The sequence spans 2156 residues: Probable capsid protein 3 (2156 aa).

The disordered stretch occupies residues Asn1319–His1345. Residues Lys1326–His1345 are compositionally biased toward basic and acidic residues.

Belongs to the NCLDV major capsid protein family.

Its subcellular location is the virion. This Acanthamoeba polyphaga mimivirus (APMV) protein is Probable capsid protein 3.